Consider the following 168-residue polypeptide: uncharacterized protein (168 aa).

The transit peptide at 1-29 directs the protein to the mitochondrion; the sequence is MGWRFPSPSPRQASPVAPLLAAPTAVRSC. Residues 98–110 show a composition bias toward basic and acidic residues; the sequence is GETKARRAREEGK. Positions 98–152 are disordered; that stretch reads GETKARRAREEGKLPSLGNAPAPRRRSVAWPAAEGSCAAPESSPPASEASLPAPE. The span at 128-152 shows a compositional bias: low complexity; it reads PAAEGSCAAPESSPPASEASLPAPE.

Its subcellular location is the mitochondrion. This is an uncharacterized protein from Homo sapiens (Human).